We begin with the raw amino-acid sequence, 430 residues long: Enolase (430 aa).

Position 163 (Q163) interacts with (2R)-2-phosphoglycerate. The Proton donor role is filled by E205. Mg(2+)-binding residues include D242, E287, and D314. (2R)-2-phosphoglycerate is bound by residues K339, R368, S369, and K390. K339 functions as the Proton acceptor in the catalytic mechanism.

This sequence belongs to the enolase family. Mg(2+) is required as a cofactor.

The protein localises to the cytoplasm. The protein resides in the secreted. It is found in the cell surface. It catalyses the reaction (2R)-2-phosphoglycerate = phosphoenolpyruvate + H2O. It functions in the pathway carbohydrate degradation; glycolysis; pyruvate from D-glyceraldehyde 3-phosphate: step 4/5. In terms of biological role, catalyzes the reversible conversion of 2-phosphoglycerate (2-PG) into phosphoenolpyruvate (PEP). It is essential for the degradation of carbohydrates via glycolysis. The polypeptide is Enolase (Exiguobacterium sibiricum (strain DSM 17290 / CCUG 55495 / CIP 109462 / JCM 13490 / 255-15)).